The primary structure comprises 187 residues: ATP synthase subunit b (187 aa).

Residues 36–53 (PYQWVSVAMLVLIAIMLW) traverse the membrane as a helical segment.

Belongs to the ATPase B chain family. F-type ATPases have 2 components, F(1) - the catalytic core - and F(0) - the membrane proton channel. F(1) has five subunits: alpha(3), beta(3), gamma(1), delta(1), epsilon(1). F(0) has four main subunits: a(1), b(2) and c(10-14). The alpha and beta chains form an alternating ring which encloses part of the gamma chain. F(1) is attached to F(0) by a central stalk formed by the gamma and epsilon chains, while a peripheral stalk is formed by the delta and b chains.

The protein localises to the cell inner membrane. Its function is as follows. F(1)F(0) ATP synthase produces ATP from ADP in the presence of a proton or sodium gradient. F-type ATPases consist of two structural domains, F(1) containing the extramembraneous catalytic core and F(0) containing the membrane proton channel, linked together by a central stalk and a peripheral stalk. During catalysis, ATP synthesis in the catalytic domain of F(1) is coupled via a rotary mechanism of the central stalk subunits to proton translocation. In terms of biological role, component of the F(0) channel, it forms part of the peripheral stalk, linking F(1) to F(0). This Erythrobacter litoralis (strain HTCC2594) protein is ATP synthase subunit b.